The chain runs to 653 residues: DNA mismatch repair protein MutL (653 aa).

The disordered stretch occupies residues 368 to 413; that stretch reads EVSQVAEPEGKTDITNKKETETKEKAEKKENKQEEKEEKTSAPEYV. The segment covering 375-408 has biased composition (basic and acidic residues); it reads PEGKTDITNKKETETKEKAEKKENKQEEKEEKTS.

It belongs to the DNA mismatch repair MutL/HexB family.

Functionally, this protein is involved in the repair of mismatches in DNA. It is required for dam-dependent methyl-directed DNA mismatch repair. May act as a 'molecular matchmaker', a protein that promotes the formation of a stable complex between two or more DNA-binding proteins in an ATP-dependent manner without itself being part of a final effector complex. The chain is DNA mismatch repair protein MutL from Lactobacillus delbrueckii subsp. bulgaricus (strain ATCC 11842 / DSM 20081 / BCRC 10696 / JCM 1002 / NBRC 13953 / NCIMB 11778 / NCTC 12712 / WDCM 00102 / Lb 14).